A 338-amino-acid chain; its full sequence is Activator of 90 kDa heat shock protein ATPase homolog 1 (338 aa).

Residue Lys3 is modified to N6-acetyllysine. Lys182 participates in a covalent cross-link: Glycyl lysine isopeptide (Lys-Gly) (interchain with G-Cter in SUMO1). Residue Ser193 is modified to Phosphoserine. Residue Lys203 forms a Glycyl lysine isopeptide (Lys-Gly) (interchain with G-Cter in SUMO2) linkage. Lys212 carries the N6-acetyllysine modification. Tyr223 bears the Phosphotyrosine; by ABL mark. Ser258 carries the post-translational modification Phosphoserine.

This sequence belongs to the AHA1 family. As to quaternary structure, interacts with HSPCA/HSP90. Interacts (phosphorylated on Tyr-223) with HSP90AA1; the interaction activates HSP90AA1 ATPase activity. Interacts with HSP90AB1. Interacts with GCH1. Interacts with SRPK1. Interacts with FLCN. In terms of assembly, (Microbial infection) Interacts with vesicular stomatitis virus glycoprotein (VSV G) (via cytoplasmic tail). In terms of processing, phosphorylation at Tyr-223 enhances binding to chaperone HSP90AA1. Expressed in numerous tissues, including brain, heart, skeletal muscle and kidney and, at lower levels, liver and placenta.

The protein resides in the cytoplasm. The protein localises to the cytosol. It is found in the endoplasmic reticulum. Acts as a co-chaperone of HSP90AA1. Activates the ATPase activity of HSP90AA1 leading to increase in its chaperone activity. Competes with the inhibitory co-chaperone FNIP1 for binding to HSP90AA1, thereby providing a reciprocal regulatory mechanism for chaperoning of client proteins. Competes with the inhibitory co-chaperone TSC1 for binding to HSP90AA1, thereby providing a reciprocal regulatory mechanism for chaperoning of client proteins. The protein is Activator of 90 kDa heat shock protein ATPase homolog 1 (AHSA1) of Homo sapiens (Human).